A 127-amino-acid polypeptide reads, in one-letter code: uncharacterized protein (127 aa).

Residues 12–32 (FFFLILFYFCIISSFLFLFIF) form a helical membrane-spanning segment.

It localises to the membrane. This is an uncharacterized protein from Saccharomyces cerevisiae (strain ATCC 204508 / S288c) (Baker's yeast).